Consider the following 273-residue polypeptide: Undecaprenyl-diphosphatase (273 aa).

Transmembrane regions (helical) follow at residues 7–27 (LWIAAILGLVEGLTEFLPVSS), 45–65 (AETFEVVIQLGSILAVVVMFW), 89–109 (LTLIHILLGMVPAVVIGLLLH), 115–135 (LFNPVNVMYALVVGGVLLIAA), 152–171 (TYRQAFMIGCFQCLALWPGF), 189–209 (YAASEFSFLLAVPMMIGATGL), 221–241 (ADFPMFAVGFVTAFIVALIAI), and 253–273 (FIPFAIYRFIVAAAVYALFVL).

The protein belongs to the UppP family.

Its subcellular location is the cell inner membrane. It catalyses the reaction di-trans,octa-cis-undecaprenyl diphosphate + H2O = di-trans,octa-cis-undecaprenyl phosphate + phosphate + H(+). Its function is as follows. Catalyzes the dephosphorylation of undecaprenyl diphosphate (UPP). Confers resistance to bacitracin. The chain is Undecaprenyl-diphosphatase from Erwinia tasmaniensis (strain DSM 17950 / CFBP 7177 / CIP 109463 / NCPPB 4357 / Et1/99).